A 1081-amino-acid polypeptide reads, in one-letter code: Probable sucrose-phosphate synthase 2 (1081 aa).

Disordered regions lie at residues 116 to 152, 239 to 267, and 760 to 780; these read EQGR…PRGN, EPTE…EDLG, and IKRQ…GDVP. Residues 256–267 show a composition bias toward acidic residues; the sequence is EPEEEEEEEDLG.

This sequence belongs to the glycosyltransferase 1 family. In terms of assembly, homodimer or homotetramer.

It carries out the reaction beta-D-fructose 6-phosphate + UDP-alpha-D-glucose = sucrose 6(F)-phosphate + UDP + H(+). Its pathway is glycan biosynthesis; sucrose biosynthesis; sucrose from D-fructose 6-phosphate and UDP-alpha-D-glucose: step 1/2. With respect to regulation, activity is regulated by phosphorylation and moderated by concentration of metabolites and light. Functionally, plays a role in photosynthetic sucrose synthesis by catalyzing the rate-limiting step of sucrose biosynthesis from UDP-glucose and fructose- 6-phosphate. Involved in the regulation of carbon partitioning in the leaves of plants. May regulate the synthesis of sucrose and therefore play a major role as a limiting factor in the export of photoassimilates out of the leaf. Plays a role for sucrose availability that is essential for plant growth and fiber elongation. The chain is Probable sucrose-phosphate synthase 2 (SPS2) from Craterostigma plantagineum (Blue gem).